The chain runs to 130 residues: Small ribosomal subunit protein uS9 (130 aa).

The protein belongs to the universal ribosomal protein uS9 family.

The protein is Small ribosomal subunit protein uS9 of Geotalea daltonii (strain DSM 22248 / JCM 15807 / FRC-32) (Geobacter daltonii).